Reading from the N-terminus, the 479-residue chain is Endoglucanase 20 (479 aa).

The N-terminal stretch at 1–21 (MGKLLVLMLVGMFLAFESLEA) is a signal peptide. A glycan (N-linked (GlcNAc...) asparagine) is linked at Asn29. Residue Asp76 is the Nucleophile of the active site. The active site involves His398. A glycan (N-linked (GlcNAc...) asparagine) is linked at Asn442. Catalysis depends on residues Asp449 and Glu458.

This sequence belongs to the glycosyl hydrolase 9 (cellulase E) family.

The protein resides in the secreted. It carries out the reaction Endohydrolysis of (1-&gt;4)-beta-D-glucosidic linkages in cellulose, lichenin and cereal beta-D-glucans.. The sequence is that of Endoglucanase 20 from Arabidopsis thaliana (Mouse-ear cress).